The primary structure comprises 598 residues: Elongation factor 4 (598 aa).

One can recognise a tr-type G domain in the interval 2–183; that stretch reads KKIRNFCIIA…AIIEKIPPPK (182 aa). Residues 14 to 19 and 130 to 133 each bind GTP; these read DHGKST and NKVD.

The protein belongs to the TRAFAC class translation factor GTPase superfamily. Classic translation factor GTPase family. LepA subfamily.

The protein resides in the cell inner membrane. The catalysed reaction is GTP + H2O = GDP + phosphate + H(+). Its function is as follows. Required for accurate and efficient protein synthesis under certain stress conditions. May act as a fidelity factor of the translation reaction, by catalyzing a one-codon backward translocation of tRNAs on improperly translocated ribosomes. Back-translocation proceeds from a post-translocation (POST) complex to a pre-translocation (PRE) complex, thus giving elongation factor G a second chance to translocate the tRNAs correctly. Binds to ribosomes in a GTP-dependent manner. The chain is Elongation factor 4 from Flavobacterium johnsoniae (strain ATCC 17061 / DSM 2064 / JCM 8514 / BCRC 14874 / CCUG 350202 / NBRC 14942 / NCIMB 11054 / UW101) (Cytophaga johnsonae).